Consider the following 160-residue polypeptide: RxLR effector protein PexRD44 (160 aa).

The first 21 residues, 1–21, serve as a signal peptide directing secretion; it reads MRLLLWVLISMLSIALSSCAA. Residues 54 to 76 carry the RxLR-dEER motif; that stretch reads RFLRGESSKIVNLKQEEGVFEER.

It belongs to the RxLR effector family.

It is found in the secreted. It localises to the host cell membrane. The protein resides in the host nucleus. Its subcellular location is the host nucleolus. Its function is as follows. Effector that is involved in host plant infection. Contributes to virulence during the early infection stage, by inhibiting plant defense responses induced by both PAMP-triggered immunity (PTI) and effector-triggered immunity (ETI). This Phytophthora infestans (strain T30-4) (Potato late blight agent) protein is RxLR effector protein PexRD44.